The primary structure comprises 467 residues: Xanthan biosynthesis protein XanB (467 aa).

It belongs to the mannose-6-phosphate isomerase type 2 family.

The enzyme catalyses D-mannose 6-phosphate = D-fructose 6-phosphate. It catalyses the reaction alpha-D-mannose 1-phosphate + GTP + H(+) = GDP-alpha-D-mannose + diphosphate. The protein operates within nucleotide-sugar biosynthesis; GDP-alpha-D-mannose biosynthesis; GDP-alpha-D-mannose from alpha-D-mannose 1-phosphate (GTP route): step 1/1. It participates in nucleotide-sugar biosynthesis; GDP-alpha-D-mannose biosynthesis; alpha-D-mannose 1-phosphate from D-fructose 6-phosphate: step 1/2. In terms of biological role, involved in xanthan production. This chain is Xanthan biosynthesis protein XanB (xanB), found in Xanthomonas campestris pv. campestris (strain B100).